The following is a 146-amino-acid chain: Putative transposon Ty5-1 protein YCL075W (146 aa).

This chain is Putative transposon Ty5-1 protein YCL075W (TY5B), found in Saccharomyces cerevisiae (strain ATCC 204508 / S288c) (Baker's yeast).